Consider the following 130-residue polypeptide: uncharacterized protein (130 aa).

The segment at asparagine 85–cysteine 116 is disordered.

It belongs to the mimivirus L5 family.

This is an uncharacterized protein from Acanthamoeba polyphaga mimivirus (APMV).